We begin with the raw amino-acid sequence, 270 residues long: Ribosomal RNA small subunit methyltransferase A (270 aa).

Positions 18, 20, 45, 66, 91, and 112 each coordinate S-adenosyl-L-methionine.

The protein belongs to the class I-like SAM-binding methyltransferase superfamily. rRNA adenine N(6)-methyltransferase family. RsmA subfamily.

It is found in the cytoplasm. It carries out the reaction adenosine(1518)/adenosine(1519) in 16S rRNA + 4 S-adenosyl-L-methionine = N(6)-dimethyladenosine(1518)/N(6)-dimethyladenosine(1519) in 16S rRNA + 4 S-adenosyl-L-homocysteine + 4 H(+). Its function is as follows. Specifically dimethylates two adjacent adenosines (A1518 and A1519) in the loop of a conserved hairpin near the 3'-end of 16S rRNA in the 30S particle. May play a critical role in biogenesis of 30S subunits. This chain is Ribosomal RNA small subunit methyltransferase A, found in Shewanella piezotolerans (strain WP3 / JCM 13877).